The sequence spans 200 residues: MARQNKQEAIYEFIKEQLREKGYPPSVREICNAVELRSTSTVHGHLKRLEEKGVIRRDPTKPRAIEVLEHSIMKKEMVDIPVVGTVTAGKPILAVENIEDTFALPINYVRNKKQLFALKIKGDSMIDTGILDGDLAIVEKNNSVLNGEIVVALLGDRATVKRFFKEKDYIRLQPENETMEPIIVKQCEIIGKVVGVYRKY.

Residues V27–K47 constitute a DNA-binding region (H-T-H motif). Catalysis depends on for autocatalytic cleavage activity residues S124 and K161.

Belongs to the peptidase S24 family. In terms of assembly, homodimer.

It carries out the reaction Hydrolysis of Ala-|-Gly bond in repressor LexA.. Its function is as follows. Represses a number of genes involved in the response to DNA damage (SOS response), including recA and lexA. In the presence of single-stranded DNA, RecA interacts with LexA causing an autocatalytic cleavage which disrupts the DNA-binding part of LexA, leading to derepression of the SOS regulon and eventually DNA repair. The chain is LexA repressor from Clostridium tetani (strain Massachusetts / E88).